Reading from the N-terminus, the 572-residue chain is Proline--tRNA ligase (572 aa).

Belongs to the class-II aminoacyl-tRNA synthetase family. ProS type 1 subfamily. As to quaternary structure, homodimer.

Its subcellular location is the cytoplasm. It carries out the reaction tRNA(Pro) + L-proline + ATP = L-prolyl-tRNA(Pro) + AMP + diphosphate. Catalyzes the attachment of proline to tRNA(Pro) in a two-step reaction: proline is first activated by ATP to form Pro-AMP and then transferred to the acceptor end of tRNA(Pro). As ProRS can inadvertently accommodate and process non-cognate amino acids such as alanine and cysteine, to avoid such errors it has two additional distinct editing activities against alanine. One activity is designated as 'pretransfer' editing and involves the tRNA(Pro)-independent hydrolysis of activated Ala-AMP. The other activity is designated 'posttransfer' editing and involves deacylation of mischarged Ala-tRNA(Pro). The misacylated Cys-tRNA(Pro) is not edited by ProRS. This chain is Proline--tRNA ligase, found in Photorhabdus laumondii subsp. laumondii (strain DSM 15139 / CIP 105565 / TT01) (Photorhabdus luminescens subsp. laumondii).